Here is a 432-residue protein sequence, read N- to C-terminus: GTPase Obg (432 aa).

The Obg domain occupies 1–159 (MKFIDTAKFT…YEVKAELKVL (159 aa)). The 173-residue stretch at 160-332 (ADVGFVGLPN…LLLKIAKELE (173 aa)) folds into the OBG-type G domain. GTP-binding positions include 166–173 (GLPNAGKS), 191–195 (FTTLN), 213–216 (DLPG), 284–287 (NKMD), and 313–315 (SGL). 2 residues coordinate Mg(2+): Ser-173 and Thr-193. Residues 354-432 (RLEEDEEDIQ…VFEYELEWMD (79 aa)) enclose the OCT domain.

It belongs to the TRAFAC class OBG-HflX-like GTPase superfamily. OBG GTPase family. Monomer. It depends on Mg(2+) as a cofactor.

The protein resides in the cytoplasm. Its function is as follows. An essential GTPase which binds GTP, GDP and possibly (p)ppGpp with moderate affinity, with high nucleotide exchange rates and a fairly low GTP hydrolysis rate. Plays a role in control of the cell cycle, stress response, ribosome biogenesis and in those bacteria that undergo differentiation, in morphogenesis control. The protein is GTPase Obg of Mesoplasma florum (strain ATCC 33453 / NBRC 100688 / NCTC 11704 / L1) (Acholeplasma florum).